Reading from the N-terminus, the 883-residue chain is Aldehyde-alcohol dehydrogenase (883 aa).

Positions 13–456 are aldehyde dehydrogenase; the sequence is KLVAEKHVDE…DNVSAINLLN (444 aa). NAD(+) is bound by residues 121–126, Gly206, and Gly224; that span reads ITPTTN. Cys257 functions as the Nucleophile in the catalytic mechanism. NAD(+) contacts are provided by residues Glu355, Leu435, and 438–443; that span reads GSYGRN. The linker stretch occupies residues 457–464; it reads IKKVGRRR. NAD(+) contacts are provided by residues Asp500, Asp534, 561 to 565, 612 to 613, Val625, Lys634, and Leu653; these read GSPMD and TT. Fe cation-binding residues include Asp668, His672, His736, and His750.

In the N-terminal section; belongs to the aldehyde dehydrogenase family. This sequence in the C-terminal section; belongs to the iron-containing alcohol dehydrogenase family. It depends on Fe(2+) as a cofactor.

The enzyme catalyses an aldehyde + NAD(+) + H2O = a carboxylate + NADH + 2 H(+). It carries out the reaction ethanol + NAD(+) = acetaldehyde + NADH + H(+). Has alcohol dehydrogenase activity. Has aldehyde dehydrogenase activity. Plays a role in enhancing virulence in mice, under ethanol stress conditions, perhaps by inducing expression of pneumolysin (Ply) and increasing production of hydrogen peroxide H(2)O(2). May be considered a potential virulence factor. The chain is Aldehyde-alcohol dehydrogenase from Streptococcus pneumoniae serotype 2 (strain D39 / NCTC 7466).